Here is a 155-residue protein sequence, read N- to C-terminus: Pathogenesis-related protein 2 (155 aa).

It belongs to the BetVI family.

This is Pathogenesis-related protein 2 from Phaseolus vulgaris (Kidney bean).